Here is a 508-residue protein sequence, read N- to C-terminus: Cytochrome P450 monooxygenase aflV (508 aa).

Residues 18-38 form a helical membrane-spanning segment; it reads LTWWFLAVGGAWIVSKIIKIL. Residues asparagine 192, asparagine 209, asparagine 302, and asparagine 408 are each glycosylated (N-linked (GlcNAc...) asparagine). A heme-binding site is contributed by cysteine 453.

It belongs to the cytochrome P450 family. Heme serves as cofactor.

The protein localises to the membrane. The protein operates within mycotoxin biosynthesis; aflatoxin biosynthesis. Its function is as follows. Cytochrome P450 monooxygenase; part of the gene cluster that mediates the biosynthesis of aflatoxins, a group of polyketide-derived furanocoumarins, and part of the most toxic and carcinogenic compounds among the known mycotoxins. The four major aflatoxins produced by A.parasiticus are aflatoxin B1 (AFB1), aflatoxin B2 (AFB2), aflatoxin G1 (AFG1) and aflatoxin G2 (AFG2). The role of the cytochrome P450 monooxygenase aflV in aflatoxin biosynthesis has still to be characterized. The biosynthesis of aflatoxins begins with the norsolorinic acid synthase aflC that combines a hexanoyl starter unit produced by the fatty acid synthase aflA/aflB and 7 malonyl-CoA extender units to synthesize the precursor NOR. The second step is the conversion of NOR to averantin and requires the norsolorinic acid ketoreductase aflD, which catalyzes the dehydration of norsolorinic acid to form (1'S)-averantin. The norsolorinic acid reductases aflE and aflF may also play a role in the conversion of NOR to AVN. The cytochrome P450 monooxygenase aflG then catalyzes the hydroxylation of AVN to 5'hydroxyaverantin (HAVN). The next step is performed by the 5'-hydroxyaverantin dehydrogenase aflH that transforms HAVN to 5'-oxoaverantin (OAVN) which is further converted to averufin (AVF) by aflK that plays a dual role in the pathway, as a 5'-oxoaverantin cyclase that mediates conversion of 5'-oxoaverantin, as well as a versicolorin B synthase in a later step in the pathway. The averufin oxidase aflI catalyzes the conversion of AVF to versiconal hemiacetal acetate (VHA). VHA is then the substrate for the versiconal hemiacetal acetate esterase aflJ to yield versiconal (VAL). Versicolorin B synthase aflK then converts VAL to versicolorin B (VERB) by closing the bisfuran ring of aflatoxin which is required for DNA-binding, thus giving to aflatoxin its activity as a mutagen. Then, the activity of the versicolorin B desaturase aflL leads to versicolorin A (VERA). A branch point starts from VERB since it can also be converted to dihydrodemethylsterigmatocystin (DMDHST), probably also by aflL, VERA being a precursor for aflatoxins B1 and G1, and DMDHST for aflatoxins B2 and G2. Next, the versicolorin reductase aflM and the cytochrome P450 monooxygenase aflN are involved in conversion of VERA to demethylsterigmatocystin (DMST). AflX and aflY seem also involved in this step, through probable aflX-mediated epoxide ring-opening step following versicolorin A oxidation and aflY-mediated Baeyer-Villiger oxidation required for the formation of the xanthone ring. The methyltransferase aflO then leads to the modification of DMST to sterigmatocystin (ST), and of DMDHST to dihydrosterigmatocystin (DHST). Both ST and DHST are then substrates of the O-methyltransferase aflP to yield O-methylsterigmatocystin (OMST) and dihydro-O-methylsterigmatocystin (DHOMST), respectively. Finally OMST is converted to aflatoxins B1 and G1, and DHOMST to aflatoxins B2 and G2, via the action of several enzymes including O-methylsterigmatocystin oxidoreductase aflQ, the cytochrome P450 monooxygenase aflU, but also the NADH-dependent flavin oxidoreductase nadA which is specifically required for the synthesis of AFG1. This chain is Cytochrome P450 monooxygenase aflV, found in Aspergillus parasiticus (strain ATCC 56775 / NRRL 5862 / SRRC 143 / SU-1).